A 153-amino-acid chain; its full sequence is Deoxyuridine 5'-triphosphate nucleotidohydrolase (153 aa).

Residues R71 to G73, N84, T88 to D90, and K98 each bind substrate.

This sequence belongs to the dUTPase family. Mg(2+) serves as cofactor.

The enzyme catalyses dUTP + H2O = dUMP + diphosphate + H(+). Its pathway is pyrimidine metabolism; dUMP biosynthesis; dUMP from dCTP (dUTP route): step 2/2. This enzyme is involved in nucleotide metabolism: it produces dUMP, the immediate precursor of thymidine nucleotides and it decreases the intracellular concentration of dUTP so that uracil cannot be incorporated into DNA. In Wolbachia pipientis wMel, this protein is Deoxyuridine 5'-triphosphate nucleotidohydrolase.